The primary structure comprises 156 residues: Small ribosomal subunit protein uS7 (156 aa).

The protein belongs to the universal ribosomal protein uS7 family. As to quaternary structure, part of the 30S ribosomal subunit. Contacts proteins S9 and S11.

One of the primary rRNA binding proteins, it binds directly to 16S rRNA where it nucleates assembly of the head domain of the 30S subunit. Is located at the subunit interface close to the decoding center, probably blocks exit of the E-site tRNA. The sequence is that of Small ribosomal subunit protein uS7 from Mycobacterium leprae (strain TN).